Here is a 398-residue protein sequence, read N- to C-terminus: Calreticulin (398 aa).

The signal sequence occupies residues 1–19 (MKAVVLVVVSLLALSSINC). The tract at residues 20 to 197 (DVFFEEKFPD…NEKVESGDLE (178 aa)) is N-domain. A disulfide bridge connects residues C105 and C137. Positions 109, 111, 128, and 135 each coordinate an alpha-D-glucoside. 7 tandem repeats follow at residues 191–202 (VESGDLEADWDF), 210–221 (DPEAKKPEDWDD), 227–238 (DPEDKKPEDWDK), 244–255 (DPDATKPEDWDD), 259–269 (GEWEPPMIDNP), 273–283 (GVWAPKQIDNP), and 287–297 (GPWVHPEIDNP). Residues 191 to 255 (VESGDLEADW…DATKPEDWDD (65 aa)) form a 4 X approximate repeats region. Residues 198–308 (ADWDFLPNKK…YTPDSNLYKR (111 aa)) are P-domain. Residues 207-251 (KIKDPEAKKPEDWDDKPTIPDPEDKKPEDWDKPEHIPDPDATKPE) are compositionally biased toward basic and acidic residues. The segment at 207–257 (KIKDPEAKKPEDWDDKPTIPDPEDKKPEDWDKPEHIPDPDATKPEDWDDEM) is disordered. A 3 X approximate repeats region spans residues 259–297 (GEWEPPMIDNPDYKGVWAPKQIDNPAYKGPWVHPEIDNP). The C-domain stretch occupies residues 309–398 (DEICAVGLDL…AAPVEEHDEL (90 aa)). D317 lines the an alpha-D-glucoside pocket. The disordered stretch occupies residues 334-398 (DDPAAAKERG…AAPVEEHDEL (65 aa)). The segment covering 337-372 (AAAKERGEVIKKRQEGEKKMKSEQDEAEREKEKAEK) has biased composition (basic and acidic residues). Residues 373-387 (PDDEEDDEDLDDETG) are compositionally biased toward acidic residues. A Prevents secretion from ER motif is present at residues 395 to 398 (HDEL).

It belongs to the calreticulin family. As to quaternary structure, monomer. In terms of tissue distribution, expressed in fat bodies. Not expressed in midgut, silk gland, ovary or testis.

It localises to the endoplasmic reticulum lumen. Molecular calcium-binding chaperone promoting folding, oligomeric assembly and quality control in the ER via the calreticulin/calnexin cycle. This lectin may interact transiently with almost all of the monoglucosylated glycoproteins that are synthesized in the ER. The polypeptide is Calreticulin (Bombyx mori (Silk moth)).